Reading from the N-terminus, the 449-residue chain is 4-aminobutyrate aminotransferase (449 aa).

The residue at position 294 (K294) is an N6-(pyridoxal phosphate)lysine.

The protein belongs to the class-III pyridoxal-phosphate-dependent aminotransferase family. Requires pyridoxal 5'-phosphate as cofactor.

The catalysed reaction is 4-aminobutanoate + 2-oxoglutarate = succinate semialdehyde + L-glutamate. It carries out the reaction (S)-3-amino-2-methylpropanoate + 2-oxoglutarate = 2-methyl-3-oxopropanoate + L-glutamate. The protein operates within amino-acid degradation; 4-aminobutanoate degradation. The protein is 4-aminobutyrate aminotransferase (gabT) of Mycobacterium bovis (strain ATCC BAA-935 / AF2122/97).